The following is a 299-amino-acid chain: Sulfate adenylyltransferase subunit 2 (299 aa).

Residues 276–299 (EREGRVIDHDSAGSMEKKKREGYF) form a disordered region.

The protein belongs to the PAPS reductase family. CysD subfamily. As to quaternary structure, heterodimer composed of CysD, the smaller subunit, and CysN.

It carries out the reaction sulfate + ATP + H(+) = adenosine 5'-phosphosulfate + diphosphate. The protein operates within sulfur metabolism; hydrogen sulfide biosynthesis; sulfite from sulfate: step 1/3. Its function is as follows. With CysN forms the ATP sulfurylase (ATPS) that catalyzes the adenylation of sulfate producing adenosine 5'-phosphosulfate (APS) and diphosphate, the first enzymatic step in sulfur assimilation pathway. APS synthesis involves the formation of a high-energy phosphoric-sulfuric acid anhydride bond driven by GTP hydrolysis by CysN coupled to ATP hydrolysis by CysD. This chain is Sulfate adenylyltransferase subunit 2, found in Pseudoalteromonas translucida (strain TAC 125).